The primary structure comprises 446 residues: Radical S-adenosyl methionine domain-containing protein 1, mitochondrial (446 aa).

Positions 15 to 277 constitute a Radical SAM core domain; it reads KGYNKLKDLP…VCEAEAMGFQ (263 aa). Residues Cys-34, Cys-38, and Cys-41 each coordinate [4Fe-4S] cluster. S-adenosyl-L-methionine contacts are provided by residues Gly-94, 95–96, Glu-130, Gln-159, Arg-171, and Asp-195; that span reads GT.

Belongs to the anaerobic coproporphyrinogen-III oxidase family. HemW subfamily.

It localises to the mitochondrion. May be a heme chaperone, appears to bind heme. Homologous bacterial proteins do not have oxygen-independent coproporphyrinogen-III oxidase activity. Binds 1 [4Fe-4S] cluster. The cluster is coordinated with 3 cysteines and an exchangeable S-adenosyl-L-methionine. This Dictyostelium discoideum (Social amoeba) protein is Radical S-adenosyl methionine domain-containing protein 1, mitochondrial (rsad1).